A 420-amino-acid chain; its full sequence is Exodeoxyribonuclease 7 large subunit (420 aa).

It belongs to the XseA family. Heterooligomer composed of large and small subunits.

Its subcellular location is the cytoplasm. It catalyses the reaction Exonucleolytic cleavage in either 5'- to 3'- or 3'- to 5'-direction to yield nucleoside 5'-phosphates.. Bidirectionally degrades single-stranded DNA into large acid-insoluble oligonucleotides, which are then degraded further into small acid-soluble oligonucleotides. The polypeptide is Exodeoxyribonuclease 7 large subunit (Helicobacter pylori (strain G27)).